Consider the following 419-residue polypeptide: Tetraspanning orphan receptor (419 aa).

At 1-28 (MPRAPALLTNDARHQFTCCLCLHVRTGT) the chain is on the cytoplasmic side. A helical transmembrane segment spans residues 29–49 (IIFGITQIIIQLVFISFLFLM). Over 50-165 (TFNPRLIPED…EVKIKHFSPY (116 aa)) the chain is Extracellular. Residues 166-186 (IAVCVTTFSLAFCCFMVHGAI) form a helical membrane-spanning segment. Residues 187–193 (TKQPTHL) are Cytoplasmic-facing. Residues 194 to 214 (LPFFFIQVFDLIICLIHILGF) form a helical membrane-spanning segment. The Extracellular segment spans residues 215-240 (MSSTSDLRLMIHTKTGPIYIKSTGFT). A helical transmembrane segment spans residues 241–261 (FIILSISCMMLAFKAYCLGMV). The Cytoplasmic portion of the chain corresponds to 262–419 (WDCYKYLMLN…SAPSNAHSSC (158 aa)). A compositionally biased stretch (low complexity) spans 303–316 (NNSIGNSGSPNEPN). Residues 303 to 328 (NNSIGNSGSPNEPNTRPRPEPITYDP) are disordered.

In terms of assembly, interacts (via N-terminal extracellular domain) with human C2a. In terms of processing, phosphorylated on tyrosine residues.

Its subcellular location is the cell membrane. In terms of biological role, cell surface receptor that binds to human complement C2a protein. This results in inhibition of the classical and lectin pathways of complement activation, probably due to interference with binding of C2a to C4b and interference with cleavage by C1 or MASP2 such that C3 convertase cannot be formed. This infers resistance to complement-mediated cell lysis, allowing parasite survival and infection. This Schistosoma mansoni (Blood fluke) protein is Tetraspanning orphan receptor.